The chain runs to 104 residues: Large ribosomal subunit protein uL24 (104 aa).

This sequence belongs to the universal ribosomal protein uL24 family. As to quaternary structure, part of the 50S ribosomal subunit.

One of two assembly initiator proteins, it binds directly to the 5'-end of the 23S rRNA, where it nucleates assembly of the 50S subunit. Its function is as follows. One of the proteins that surrounds the polypeptide exit tunnel on the outside of the subunit. The polypeptide is Large ribosomal subunit protein uL24 (Anaplasma phagocytophilum (strain HZ)).